The primary structure comprises 1492 residues: ATP-binding cassette sub-family C member 10 (1492 aa).

9 consecutive transmembrane segments (helical) span residues 32–52 (LVLSALPHALLAVLSACYLGT), 70–90 (LAASFLLSVFPLLDLLPVALP), 102–122 (VLAGCVAAVAWISHSLALWVL), 133–153 (PLALALVALLPAPALVLTVLW), 172–192 (LCLLILQLAALLAYALGWAAP), 293–313 (LVGTMLGFSGPLLLSLLVGFL), 320–340 (LSHGLLYALGLAGGAVLGAVL), 391–411 (LLNFAGSFHEAWGLPLQLAIT), and 414–434 (LLYQQVGVAFVGGLILALLLV). Residues 285-563 (YLALGLLKLV…FPWVINGLLE (279 aa)) enclose the ABC transmembrane type-1 1 domain. Threonine 463 is subject to Phosphothreonine. A Phosphoserine modification is found at serine 467. 2 consecutive transmembrane segments (helical) span residues 507–527 (VYLWAALPVVISIVIFITYVL) and 538–558 (FTALALVRMLILPLNNFPWVI). One can recognise an ABC transporter 1 domain in the interval 598 to 824 (LELHGALFSW…VQAVPKAWAE (227 aa)). 633 to 640 (GKVGCGKS) lines the ATP pocket. A disordered region spans residues 825–860 (NGQESDSATAQSVQNPEKTKEGLEEEQSTSGRLLQE). Residues 826 to 840 (GQESDSATAQSVQNP) are compositionally biased toward polar residues. A run of 6 helical transmembrane segments spans residues 875–895 (AYWKAVGQGLALAILFSLLLM), 933–953 (LFSPQLLLFSPGNLYIPVFPL), 974–994 (IAGVNSLCTLLRAVLFAAGTL), 1051–1071 (AGLLGLLAVLGSGLPWLLLLL), 1153–1173 (IRLQLMGAAVVSAIAGIALVQ), and 1182–1202 (GLVGLSLSYALSLTGLLSGLV). The ABC transmembrane type-1 2 domain occupies 885–1210 (ALAILFSLLL…LVSSFTQTEA (326 aa)). The 234-residue stretch at 1246-1479 (VEFQDVVLAY…PHSLFQQLLQ (234 aa)) folds into the ABC transporter 2 domain. 1280–1287 (GRTGSGKS) is an ATP binding site.

Belongs to the ABC transporter superfamily. ABCC family. Conjugate transporter (TC 3.A.1.208) subfamily. In testis, localized to peritubular myoid cells, Leydig cells, along the basal membrane of Sertoli cells, moderately in the adluminal compartment of the seminiferous tubules, and in vascular endothelial cells. As to expression, specifically expressed in spleen. In terms of tissue distribution, widely expressed.

It is found in the cell membrane. It localises to the basolateral cell membrane. The protein localises to the basal cell membrane. The enzyme catalyses ATP + H2O + xenobioticSide 1 = ADP + phosphate + xenobioticSide 2.. It carries out the reaction an S-substituted glutathione(in) + ATP + H2O = an S-substituted glutathione(out) + ADP + phosphate + H(+). It catalyses the reaction 17beta-estradiol 17-O-(beta-D-glucuronate)(in) + ATP + H2O = 17beta-estradiol 17-O-(beta-D-glucuronate)(out) + ADP + phosphate + H(+). The catalysed reaction is leukotriene C4(in) + ATP + H2O = leukotriene C4(out) + ADP + phosphate + H(+). In terms of biological role, ATP-dependent transporter of the ATP-binding cassette (ABC) family that actively extrudes physiological compounds, and xenobiotics from cells. Lipophilic anion transporter that mediates ATP-dependent transport of glucuronide conjugates such as estradiol-17-beta-o-glucuronide and GSH conjugates such as leukotriene C4 (LTC4). May contribute to regulate the transport of organic compounds in testes across the blood-testis-barrier. Mediates multidrug resistance (MDR) in cancer cells by preventing the intracellular accumulation of certain antitumor drugs, such as, docetaxel and paclitaxel. Does not transport glycocholic acid, taurocholic acid, MTX, folic acid, cAMP, or cGMP. This is ATP-binding cassette sub-family C member 10 (ABCC10) from Homo sapiens (Human).